Here is a 156-residue protein sequence, read N- to C-terminus: MPRRREVPKREILPDPKFGNVEVAKFMNVLMLDGKKSVAERIVYGAFDHIEKKANKEPLEIFSTAMGNVKPMVEVKSRRVGGANYQVPVEVRPSRRSALAMRWVREAAKKRGEKSMAQRLANELLEAAEGRGGAMKKREEVHRMAEANKAFSHFRF.

This sequence belongs to the universal ribosomal protein uS7 family. Part of the 30S ribosomal subunit. Contacts proteins S9 and S11.

One of the primary rRNA binding proteins, it binds directly to 16S rRNA where it nucleates assembly of the head domain of the 30S subunit. Is located at the subunit interface close to the decoding center, probably blocks exit of the E-site tRNA. This chain is Small ribosomal subunit protein uS7, found in Polynucleobacter asymbioticus (strain DSM 18221 / CIP 109841 / QLW-P1DMWA-1) (Polynucleobacter necessarius subsp. asymbioticus).